The primary structure comprises 367 residues: tRNA-specific 2-thiouridylase MnmA (367 aa).

Residues 7–14 (AMSGGVDS) and Met-33 contribute to the ATP site. Cys-108 acts as the Nucleophile in catalysis. Residues Cys-108 and Cys-200 are joined by a disulfide bond. Position 132 (Gly-132) interacts with ATP. Residues 150-152 (KDQ) form an interaction with tRNA region. Cys-200 functions as the Cysteine persulfide intermediate in the catalytic mechanism. Residues 301–302 (RY) are interaction with tRNA.

Belongs to the MnmA/TRMU family.

Its subcellular location is the cytoplasm. It catalyses the reaction S-sulfanyl-L-cysteinyl-[protein] + uridine(34) in tRNA + AH2 + ATP = 2-thiouridine(34) in tRNA + L-cysteinyl-[protein] + A + AMP + diphosphate + H(+). Catalyzes the 2-thiolation of uridine at the wobble position (U34) of tRNA, leading to the formation of s(2)U34. The protein is tRNA-specific 2-thiouridylase MnmA of Thermus thermophilus (strain ATCC BAA-163 / DSM 7039 / HB27).